A 179-amino-acid chain; its full sequence is Large ribosomal subunit protein uL6 (179 aa).

It belongs to the universal ribosomal protein uL6 family. As to quaternary structure, part of the 50S ribosomal subunit.

This protein binds to the 23S rRNA, and is important in its secondary structure. It is located near the subunit interface in the base of the L7/L12 stalk, and near the tRNA binding site of the peptidyltransferase center. This Pelodictyon phaeoclathratiforme (strain DSM 5477 / BU-1) protein is Large ribosomal subunit protein uL6.